Reading from the N-terminus, the 84-residue chain is Defensin-like protein 140 (84 aa).

The signal sequence occupies residues 1 to 28 (MSKSLQLIVTVLCIFTILVLGEICLAKG). Intrachain disulfides connect Cys-37–Cys-81, Cys-46–Cys-65, Cys-51–Cys-75, and Cys-55–Cys-77.

It belongs to the DEFL family.

The protein resides in the secreted. The polypeptide is Defensin-like protein 140 (LCR15) (Arabidopsis thaliana (Mouse-ear cress)).